We begin with the raw amino-acid sequence, 578 residues long: Glutamate--tRNA ligase (578 aa).

The 'HIGH' region motif lies at 97–107 (PNPDFVIHLGN).

The protein belongs to the class-I aminoacyl-tRNA synthetase family. Glutamate--tRNA ligase type 2 subfamily.

It is found in the cytoplasm. It carries out the reaction tRNA(Glu) + L-glutamate + ATP = L-glutamyl-tRNA(Glu) + AMP + diphosphate. Catalyzes the attachment of glutamate to tRNA(Glu) in a two-step reaction: glutamate is first activated by ATP to form Glu-AMP and then transferred to the acceptor end of tRNA(Glu). This is Glutamate--tRNA ligase from Hyperthermus butylicus (strain DSM 5456 / JCM 9403 / PLM1-5).